Consider the following 249-residue polypeptide: Secreted flagellin C (249 aa).

As to quaternary structure, interacts with FliS.

The protein resides in the secreted. Functionally, might play a role in virulence. This chain is Secreted flagellin C (flaC), found in Campylobacter jejuni subsp. jejuni serotype O:6 (strain 81116 / NCTC 11828).